Here is a 465-residue protein sequence, read N- to C-terminus: Endo-1,3-1,4-beta-glycanase ExsH (465 aa).

Hemolysin-type calcium-binding repeat units lie at residues 33-50 (HGTAGNDSMWGDSSVNVT), 105-122 (FGNEADNIIKGGSGTQTI), and 123-140 (DGRGGNDVLIGAGGADTF). The 257-residue stretch at 206 to 462 (AHQFRLSLDR…YIKAYSLDAD (257 aa)) folds into the GH16 domain. The active-site Nucleophile is the glutamate 349. The Proton donor role is filled by glutamate 354.

This sequence belongs to the glycosyl hydrolase 16 family.

It localises to the secreted. It functions in the pathway glycan metabolism; exopolysaccharide biosynthesis. Cleaves high molecular weight succinoglycan to yield LMW succinoglycan. Dynamically regulates the molecular weight distribution of succinoglycan by cleaving nascent succinoglycan only during a limited period after its synthesis, perhaps before it undergoes a time-dependent change in its conformation or aggregation state. This chain is Endo-1,3-1,4-beta-glycanase ExsH (exsH), found in Rhizobium meliloti (strain 1021) (Ensifer meliloti).